The primary structure comprises 448 residues: Acetate kinase (448 aa).

N7 contributes to the Mg(2+) binding site. Position 14 (K14) interacts with ATP. R91 contacts substrate. D148 serves as the catalytic Proton donor/acceptor. Residues 208 to 212 (HIGNG) and 283 to 285 (DRR) each bind ATP. E388 is a Mg(2+) binding site.

Belongs to the acetokinase family. Homodimer. Mg(2+) is required as a cofactor. Mn(2+) serves as cofactor.

It is found in the cytoplasm. The enzyme catalyses acetate + ATP = acetyl phosphate + ADP. It participates in metabolic intermediate biosynthesis; acetyl-CoA biosynthesis; acetyl-CoA from acetate: step 1/2. Catalyzes the formation of acetyl phosphate from acetate and ATP. Can also catalyze the reverse reaction. The protein is Acetate kinase of Treponema pallidum (strain Nichols).